A 293-amino-acid chain; its full sequence is MWICPGGGGGGGGGGGGGDREDARPAPLCCGRCWRSGCAARPPRMCRDGYEPCVNEGMCVTYHNGTGYCKCPEGFLGEYCQHRDPCEKNRCQNGGTCVAQAMLGKATCRCASGFTGEDCQYSTSHPCFVSRPCLNGGTCHMLSRDTYECTCQVGFTGKECQWTDACLSHPCANGSTCTTVANQFSCKCLTGFTGQKCETDVNECDIPGHCQHGGTCLNLPGSYQCQCLQGFTGQYCDSLYVPCAPSPCVNGGTCRQTGDFTFECNCLPETVRRGTELWERDREVWNGKEHDEN.

EGF-like domains lie at 42-81 (PPRM…EYCQ), 82-120 (HRDP…EDCQ), 123-161 (TSHP…KECQ), and 162-198 (WTDA…QKCE). Disulfide bonds link Cys-46–Cys-59, Cys-53–Cys-69, Cys-71–Cys-80, Cys-86–Cys-97, Cys-91–Cys-108, Cys-110–Cys-119, Cys-127–Cys-139, Cys-133–Cys-149, Cys-151–Cys-160, Cys-166–Cys-177, Cys-171–Cys-186, Cys-188–Cys-197, Cys-204–Cys-216, Cys-210–Cys-225, Cys-227–Cys-236, Cys-243–Cys-254, and Cys-248–Cys-264. The N-linked (GlcNAc...) asparagine glycan is linked to Asn-64. The N-linked (GlcNAc...) asparagine glycan is linked to Asn-173. Residues 200-237 (DVNECDIPGHCQHGGTCLNLPGSYQCQCLQGFTGQYCD) form the EGF-like 5; calcium-binding domain. The EGF-like 6 domain occupies 239-276 (LYVPCAPSPCVNGGTCRQTGDFTFECNCLPETVRRGTE).

The protein belongs to the NOTCH family. In terms of assembly, interacts with NOTCH2. Interacts with DLL1; the interaction is direct. As to expression, expressed in radial glia neural stem cells during cortical development.

The protein localises to the secreted. Human-specific protein that promotes neural progenitor proliferation and evolutionary expansion of the brain neocortex by regulating the Notch signaling pathway. Able to promote neural progenitor self-renewal, possibly by down-regulating neuronal differentiation genes, thereby delaying the differentiation of neuronal progenitors and leading to an overall final increase in neuronal production. Acts by enhancing the Notch signaling pathway via two different mechanisms that probably work in parallel to reach the same effect. Enhances Notch signaling pathway in a non-cell-autonomous manner via direct interaction with NOTCH2. Also promotes Notch signaling pathway in a cell-autonomous manner through inhibition of cis DLL1-NOTCH2 interactions, which promotes neuronal differentiation. In Homo sapiens (Human), this protein is Notch homolog 2 N-terminal-like protein C.